Here is a 4060-residue protein sequence, read N- to C-terminus: Replicase polyprotein 1a (4060 aa).

One can recognise a CoV Nsp1 globular domain in the interval 2–109 (FYNQVTLAVA…DFDVVFGHGA (108 aa)). In terms of domain architecture, CoV Nsp2 N-terminal spans 112–358 (VVFVDKYMCG…NTLLSNQLRL (247 aa)). Zn(2+)-binding residues include Cys245, Cys247, Cys264, and Cys265. Residues 245–265 (CNCGSESWSVGAWDGYLSSCC) are C4. The CoV Nsp2 middle domain maps to 388-778 (YDDILTNNKP…LDVYNGFLET (391 aa)). Residues 776–898 (LETVCSVAYT…LPVAFTKLAG (123 aa)) form the CoV Nsp2 C-terminal domain. A Ubiquitin-like 1 domain is found at 899–994 (GKISFSDDVI…VMISQWPISN (96 aa)). The Peptidase C16 1 domain occupies 1021–1262 (EVDIIEQPFE…EAGEVKPFAV (242 aa)). Cys1062 acts as the For PL1-PRO activity in catalysis. Residues Cys1134, Cys1136, Cys1163, and Cys1165 each coordinate Zn(2+). The C4-type 1 zinc-finger motif lies at 1134 to 1165 (CDCGKKFDDQVGCLFWIMPYTKLFQKGECCIC). Residues His1212 and Asp1225 each act as for PL1-PRO activity in the active site. In terms of domain architecture, Macro spans 1263–1421 (YKNVKFYLGD…AVLKFLDGLD (159 aa)). Residues 1579–1633 (NDNVVLKITEDGINVKDVVVESSKSLGKQLGVVSDGVDSFEGVLPINTDTVLSVA) enclose the Ubiquitin-like 2 domain. A Peptidase C16 2 domain is found at 1640–1886 (AFYGFEKAAL…VPTIVSEKIS (247 aa)). The For PL2-PRO activity role is filled by Cys1678. 4 residues coordinate Zn(2+): Cys1757, Cys1760, Cys1786, and His1788. A C4-type 2; atypical zinc finger spans residues 1757–1788 (CDICKSTVVEVKSAIVCASVLKDGCDVGFCPH). Active-site for PL2-PRO activity residues include His1836 and Asp1841. A run of 2 helical transmembrane segments spans residues 1903 to 1923 (DFVMNNIVLFLTWLLSMFSLL) and 1968 to 1988 (IVTLFKFLLLLYAIYALVFMI). Positions 1903–2131 (DFVMNNIVLF…LFVRHIIVGC (229 aa)) are HD1. The 66-residue stretch at 1983 to 2048 (ALVFMIVQFS…TSLVWKHIRD (66 aa)) folds into the 3Ecto domain. Disulfide bonds link Cys1999–Cys2026 and Cys2017–Cys2023. 3 helical membrane passes run 2050–2070 (ILISLQPFVILVILLIFGNMY), 2073–2093 (FGLLYFVAQFISTFGSFLGFH), and 2111–2131 (FLATFIVCKIVLFVRHIIVGC). The segment at 2122 to 2212 (LFVRHIIVGC…VVKTAVQPTA (91 aa)) is Y1. The 340-residue stretch at 2122–2461 (LFVRHIIVGC…PATSIVAKQG (340 aa)) folds into the CoV Nsp3 Y domain. Zn(2+) is bound by residues His2126, Cys2131, Cys2136, Cys2139, Cys2172, His2175, Cys2179, and Cys2182. The ZF1 stretch occupies residues 2126-2139 (HIIVGCNNADCVAC). The tract at residues 2172–2182 (CNKHNFFCVNC) is ZF2. The interval 2213 to 2302 (PAYVIIDKVD…LVNSELLSTL (90 aa)) is Y2. The coV-Y stretch occupies residues 2213–2461 (PAYVIIDKVD…PATSIVAKQG (249 aa)). The interval 2303 to 2359 (SVDFNGVLHKAYVDVLCNSFFKELTANMSMAECKATLGLTVSDDDFVSAVANAHRYD) is Y3. A Y4 region spans residues 2360-2461 (VLLSDLSFNN…PATSIVAKQG (102 aa)). Transmembrane regions (helical) follow at residues 2468-2488 (YNFLWYVCLFVVALFIGVSFI), 2727-2747 (GHMLFNFLFAAFITFLCFLVT), 2752-2769 (VFGDLSYGVFTVVCATLI), 2772-2792 (ISYVVTQNLFFMLLYAILYFV), and 2800-2820 (AWIWHIAYIVAYFLLIPWWLL). The segment at 2468 to 2820 (YNFLWYVCLF…YFLLIPWWLL (353 aa)) is HD2. One can recognise a Nsp4C domain in the interval 2844 to 2939 (LFEGDKFIGT…PTISYNSTLQ (96 aa)). The Peptidase C30 domain occupies 2940–3242 (SGLKKMAQPS…VKQMYGVNLQ (303 aa)). Residues His2980 and Cys3083 each act as for 3CL-PRO activity in the active site. 7 consecutive transmembrane segments (helical) span residues 3254–3274 (FLFSVFFTMFWAELFIYTNTI), 3279–3299 (VILTPIFCLLLFLSLVLTMFL), 3303–3323 (FLFLQVFLLPTVIATALYNCV), 3342–3362 (VLQMDVQGLVNVLVCLFVVFL), 3376–3396 (FTYVCSLIAVAYTYFYSGDFL), 3397–3417 (SLLVMFLCAISSDWYIGAIVF), and 3442–3462 (LVVYLICGYLVCTYWGILYWF). The tract at residues 3254-3462 (FLFSVFFTMF…CTYWGILYWF (209 aa)) is HD3. Residues 3522–3604 (SKLTDLKCTN…SYFDNSSTLQ (83 aa)) enclose the RdRp Nsp7 cofactor domain. In terms of domain architecture, RdRp Nsp8 cofactor spans 3605–3799 (SVASSFVSMP…LNCERVVKLQ (195 aa)). Residues 3800–3908 (NNEIMPGKLK…GFIGATIRLQ (109 aa)) enclose the Nsp9 ssRNA-binding domain. An ExoN/MTase coactivator domain is found at 3909-4047 (AGKQTELAVN…DRTTIQSVDI (139 aa)). The Zn(2+) site is built by Cys3982, Cys3985, His3991, Cys3998, Cys4024, Cys4027, Cys4035, and Cys4037. Zinc fingers lie at residues 3982–3998 (CLYCRAHVPHPSMDGYC) and 4024–4037 (CNVCGCWLGHGCAC).

The protein belongs to the coronaviruses polyprotein 1ab family. 3CL-PRO exists as monomer and homodimer. Eight copies of nsp7 and eight copies of nsp8 assemble to form a heterohexadecamer. Nsp9 is a dimer. Nsp10 forms a dodecamer. Post-translationally, specific enzymatic cleavages in vivo by its own proteases yield mature proteins. 3CL-PRO and PL-PRO proteinases are autocatalytically processed.

It is found in the host membrane. The protein resides in the host cytoplasm. Its subcellular location is the host perinuclear region. The enzyme catalyses Thiol-dependent hydrolysis of ester, thioester, amide, peptide and isopeptide bonds formed by the C-terminal Gly of ubiquitin (a 76-residue protein attached to proteins as an intracellular targeting signal).. Its function is as follows. The papain-like proteinase 1 (PLP1) and papain-like proteinase 2 (PLP2) are responsible for the cleavages located at the N-terminus of the replicase polyprotein. In addition, PLP2 possesses a deubiquitinating/deISGylating activity and processes both 'Lys-48'- and 'Lys-63'-linked polyubiquitin chains from cellular substrates. PLP2 also antagonizes innate immune induction of type I interferon by blocking the nuclear translocation of host IRF-3. Functionally, responsible for the majority of cleavages as it cleaves the C-terminus of replicase polyprotein at 11 sites. Recognizes substrates containing the core sequence [ILMVF]-Q-|-[SGACN]. Inhibited by the substrate-analog Cbz-Val-Asn-Ser-Thr-Leu-Gln-CMK. Also contains an ADP-ribose-1''-phosphate (ADRP)-binding function. In terms of biological role, nsp7-nsp8 hexadecamer may possibly confer processivity to the polymerase, maybe by binding to dsRNA or by producing primers utilized by the latter. Nsp9 is a ssRNA-binding protein. The polypeptide is Replicase polyprotein 1a (Homo sapiens (Human)).